The chain runs to 330 residues: Ketol-acid reductoisomerase (NADP(+)) (330 aa).

The 181-residue stretch at 1–181 (MNIYYEQDAD…GGTKAGVIET (181 aa)) folds into the KARI N-terminal Rossmann domain. Residues 24–27 (YGSQ), lysine 47, serine 50, serine 52, and 82–85 (DQTQ) each bind NADP(+). Histidine 107 is an active-site residue. Residue glycine 133 coordinates NADP(+). Residues 182-327 (SFKDETETDL…AKLRGMMSWL (146 aa)) form the KARI C-terminal knotted domain. Mg(2+) contacts are provided by aspartate 190, glutamate 194, glutamate 226, and glutamate 230. Serine 251 contributes to the substrate binding site.

The protein belongs to the ketol-acid reductoisomerase family. It depends on Mg(2+) as a cofactor.

The catalysed reaction is (2R)-2,3-dihydroxy-3-methylbutanoate + NADP(+) = (2S)-2-acetolactate + NADPH + H(+). It carries out the reaction (2R,3R)-2,3-dihydroxy-3-methylpentanoate + NADP(+) = (S)-2-ethyl-2-hydroxy-3-oxobutanoate + NADPH + H(+). It participates in amino-acid biosynthesis; L-isoleucine biosynthesis; L-isoleucine from 2-oxobutanoate: step 2/4. Its pathway is amino-acid biosynthesis; L-valine biosynthesis; L-valine from pyruvate: step 2/4. In terms of biological role, involved in the biosynthesis of branched-chain amino acids (BCAA). Catalyzes an alkyl-migration followed by a ketol-acid reduction of (S)-2-acetolactate (S2AL) to yield (R)-2,3-dihydroxy-isovalerate. In the isomerase reaction, S2AL is rearranged via a Mg-dependent methyl migration to produce 3-hydroxy-3-methyl-2-ketobutyrate (HMKB). In the reductase reaction, this 2-ketoacid undergoes a metal-dependent reduction by NADPH to yield (R)-2,3-dihydroxy-isovalerate. The polypeptide is Ketol-acid reductoisomerase (NADP(+)) (Chlorobaculum tepidum (strain ATCC 49652 / DSM 12025 / NBRC 103806 / TLS) (Chlorobium tepidum)).